A 766-amino-acid chain; its full sequence is Phosphoribosylformylglycinamidine synthase subunit PurL (766 aa).

His66 is an active-site residue. Residues Tyr69 and Lys113 each contribute to the ATP site. A Mg(2+)-binding site is contributed by Glu115. Substrate contacts are provided by residues 116-119 (SHNH) and Arg138. His117 functions as the Proton acceptor in the catalytic mechanism. Asp139 provides a ligand contact to Mg(2+). Gln264 is a substrate binding site. Asp292 is a binding site for Mg(2+). Substrate is bound at residue 336–338 (ESQ). The ATP site is built by Asn524 and Gly561. Asn562 lines the Mg(2+) pocket. Position 564 (Ser564) interacts with substrate.

This sequence belongs to the FGAMS family. Monomer. Part of the FGAM synthase complex composed of 1 PurL, 1 PurQ and 2 PurS subunits.

It is found in the cytoplasm. The enzyme catalyses N(2)-formyl-N(1)-(5-phospho-beta-D-ribosyl)glycinamide + L-glutamine + ATP + H2O = 2-formamido-N(1)-(5-O-phospho-beta-D-ribosyl)acetamidine + L-glutamate + ADP + phosphate + H(+). It functions in the pathway purine metabolism; IMP biosynthesis via de novo pathway; 5-amino-1-(5-phospho-D-ribosyl)imidazole from N(2)-formyl-N(1)-(5-phospho-D-ribosyl)glycinamide: step 1/2. Its function is as follows. Part of the phosphoribosylformylglycinamidine synthase complex involved in the purines biosynthetic pathway. Catalyzes the ATP-dependent conversion of formylglycinamide ribonucleotide (FGAR) and glutamine to yield formylglycinamidine ribonucleotide (FGAM) and glutamate. The FGAM synthase complex is composed of three subunits. PurQ produces an ammonia molecule by converting glutamine to glutamate. PurL transfers the ammonia molecule to FGAR to form FGAM in an ATP-dependent manner. PurS interacts with PurQ and PurL and is thought to assist in the transfer of the ammonia molecule from PurQ to PurL. The sequence is that of Phosphoribosylformylglycinamidine synthase subunit PurL from Mycobacterium tuberculosis (strain CDC 1551 / Oshkosh).